A 442-amino-acid chain; its full sequence is Probable D-serine dehydratase (442 aa).

Lys111 carries the post-translational modification N6-(pyridoxal phosphate)lysine.

The protein belongs to the serine/threonine dehydratase family. DsdA subfamily. Requires pyridoxal 5'-phosphate as cofactor.

It catalyses the reaction D-serine = pyruvate + NH4(+). This is Probable D-serine dehydratase from Sinorhizobium medicae (strain WSM419) (Ensifer medicae).